The primary structure comprises 459 residues: ATP-dependent protease ATPase subunit HslU (459 aa).

ATP-binding positions include V26, G68–E73, D271, E337, and R409.

It belongs to the ClpX chaperone family. HslU subfamily. As to quaternary structure, a double ring-shaped homohexamer of HslV is capped on each side by a ring-shaped HslU homohexamer. The assembly of the HslU/HslV complex is dependent on binding of ATP.

The protein localises to the cytoplasm. ATPase subunit of a proteasome-like degradation complex; this subunit has chaperone activity. The binding of ATP and its subsequent hydrolysis by HslU are essential for unfolding of protein substrates subsequently hydrolyzed by HslV. HslU recognizes the N-terminal part of its protein substrates and unfolds these before they are guided to HslV for hydrolysis. In Xylella fastidiosa (strain 9a5c), this protein is ATP-dependent protease ATPase subunit HslU.